Consider the following 295-residue polypeptide: ATP synthase gamma chain (295 aa).

This sequence belongs to the ATPase gamma chain family. F-type ATPases have 2 components, CF(1) - the catalytic core - and CF(0) - the membrane proton channel. CF(1) has five subunits: alpha(3), beta(3), gamma(1), delta(1), epsilon(1). CF(0) has three main subunits: a, b and c.

Its subcellular location is the cell inner membrane. Its function is as follows. Produces ATP from ADP in the presence of a proton gradient across the membrane. The gamma chain is believed to be important in regulating ATPase activity and the flow of protons through the CF(0) complex. This chain is ATP synthase gamma chain, found in Aliarcobacter butzleri (strain RM4018) (Arcobacter butzleri).